Here is a 224-residue protein sequence, read N- to C-terminus: Ribonuclease 3 (224 aa).

An RNase III domain is found at 5 to 127 (LERLCRRLNY…ILAAIYLDGG (123 aa)). Glu40 contributes to the Mg(2+) binding site. The active site involves Asp44. Mg(2+) contacts are provided by Asp113 and Glu116. Glu116 is a catalytic residue. A DRBM domain is found at 154-224 (DAKTQLQEFL…AKAMLEQLQG (71 aa)).

The protein belongs to the ribonuclease III family. In terms of assembly, homodimer. Mg(2+) is required as a cofactor.

The protein localises to the cytoplasm. It carries out the reaction Endonucleolytic cleavage to 5'-phosphomonoester.. Digests double-stranded RNA. Involved in the processing of primary rRNA transcript to yield the immediate precursors to the large and small rRNAs (23S and 16S). Processes some mRNAs, and tRNAs when they are encoded in the rRNA operon. Processes pre-crRNA and tracrRNA of type II CRISPR loci if present in the organism. The polypeptide is Ribonuclease 3 (Legionella pneumophila (strain Paris)).